A 215-amino-acid polypeptide reads, in one-letter code: Ribose-5-phosphate isomerase A (215 aa).

Substrate is bound by residues 26-29 (TGST), 79-82 (DGAD), and 92-95 (KGGG). Glutamate 101 (proton acceptor) is an active-site residue. Position 119 (lysine 119) interacts with substrate.

Belongs to the ribose 5-phosphate isomerase family. As to quaternary structure, homodimer.

It catalyses the reaction aldehydo-D-ribose 5-phosphate = D-ribulose 5-phosphate. It participates in carbohydrate degradation; pentose phosphate pathway; D-ribose 5-phosphate from D-ribulose 5-phosphate (non-oxidative stage): step 1/1. Functionally, catalyzes the reversible conversion of ribose-5-phosphate to ribulose 5-phosphate. The protein is Ribose-5-phosphate isomerase A of Xylella fastidiosa (strain M12).